Consider the following 187-residue polypeptide: Probable chorismate pyruvate-lyase (187 aa).

3 residues coordinate substrate: R77, L115, and E174.

Belongs to the UbiC family.

The protein localises to the cytoplasm. The enzyme catalyses chorismate = 4-hydroxybenzoate + pyruvate. It functions in the pathway cofactor biosynthesis; ubiquinone biosynthesis. Functionally, removes the pyruvyl group from chorismate, with concomitant aromatization of the ring, to provide 4-hydroxybenzoate (4HB) for the ubiquinone pathway. The protein is Probable chorismate pyruvate-lyase of Shewanella sp. (strain ANA-3).